Reading from the N-terminus, the 398-residue chain is Probable aminomethyltransferase (398 aa).

The protein belongs to the GcvT family. As to quaternary structure, the glycine cleavage system is composed of four proteins: P, T, L and H.

It carries out the reaction N(6)-[(R)-S(8)-aminomethyldihydrolipoyl]-L-lysyl-[protein] + (6S)-5,6,7,8-tetrahydrofolate = N(6)-[(R)-dihydrolipoyl]-L-lysyl-[protein] + (6R)-5,10-methylene-5,6,7,8-tetrahydrofolate + NH4(+). Functionally, the glycine cleavage system catalyzes the degradation of glycine. This Pyrococcus abyssi (strain GE5 / Orsay) protein is Probable aminomethyltransferase.